A 199-amino-acid polypeptide reads, in one-letter code: Outer-membrane lipoprotein LolB (199 aa).

The signal sequence occupies residues 1–28; that stretch reads MSVCPAPRSPVRWLHAFTLCLLLAVLAG. C29 carries the N-palmitoyl cysteine lipid modification. C29 carries the S-diacylglycerol cysteine lipid modification.

The protein belongs to the LolB family. In terms of assembly, monomer.

It localises to the cell outer membrane. In terms of biological role, plays a critical role in the incorporation of lipoproteins in the outer membrane after they are released by the LolA protein. This Bordetella parapertussis (strain 12822 / ATCC BAA-587 / NCTC 13253) protein is Outer-membrane lipoprotein LolB.